Consider the following 653-residue polypeptide: Putative clathrin assembly protein At2g25430 (653 aa).

An ENTH domain is found at 23–159 (VASNMAPDLE…ELALFERKSG (137 aa)). A compositionally biased stretch (low complexity) spans 160 to 171 (VSVNSGGNSSHH). The tract at residues 160 to 240 (VSVNSGGNSS…GGGGGGRDEK (81 aa)) is disordered. A compositionally biased stretch (basic and acidic residues) spans 172–186 (SNNDDRYGRGRDDFR). A compositionally biased stretch (gly residues) spans 197-214 (NGGGGGSDFRGDNNGYGG). At S221 the chain carries Phosphoserine. T244 bears the Phosphothreonine mark. A compositionally biased stretch (basic and acidic residues) spans 376–389 (RAKRGKSPERKEIE). The interval 376-431 (RAKRGKSPERKEIEAPPPVVEEEEPEPDMNEIKALPPPENYTPPPPPEPEPQPEKP) is disordered. The span at 395–404 (VEEEEPEPDM) shows a compositional bias: acidic residues. The segment covering 410–425 (LPPPENYTPPPPPEPE) has biased composition (pro residues).

It localises to the membrane. The protein localises to the clathrin-coated pit. It is found in the golgi apparatus. The protein resides in the cytoplasmic vesicle. Its subcellular location is the clathrin-coated vesicle. The chain is Putative clathrin assembly protein At2g25430 from Arabidopsis thaliana (Mouse-ear cress).